Here is a 110-residue protein sequence, read N- to C-terminus: Large ribosomal subunit protein uL22 (110 aa).

This sequence belongs to the universal ribosomal protein uL22 family. Part of the 50S ribosomal subunit.

Its function is as follows. This protein binds specifically to 23S rRNA; its binding is stimulated by other ribosomal proteins, e.g. L4, L17, and L20. It is important during the early stages of 50S assembly. It makes multiple contacts with different domains of the 23S rRNA in the assembled 50S subunit and ribosome. The globular domain of the protein is located near the polypeptide exit tunnel on the outside of the subunit, while an extended beta-hairpin is found that lines the wall of the exit tunnel in the center of the 70S ribosome. The chain is Large ribosomal subunit protein uL22 from Pseudoalteromonas translucida (strain TAC 125).